A 561-amino-acid polypeptide reads, in one-letter code: Lysine--tRNA ligase (561 aa).

Positions 409 and 416 each coordinate Mg(2+).

The protein belongs to the class-II aminoacyl-tRNA synthetase family. Homodimer. The cofactor is Mg(2+).

It is found in the cytoplasm. It carries out the reaction tRNA(Lys) + L-lysine + ATP = L-lysyl-tRNA(Lys) + AMP + diphosphate. This chain is Lysine--tRNA ligase, found in Nostoc sp. (strain PCC 7120 / SAG 25.82 / UTEX 2576).